We begin with the raw amino-acid sequence, 307 residues long: uncharacterized protein (307 aa).

One can recognise an ABC transporter domain in the interval V5–P233. Position 37 to 44 (G37 to T44) interacts with ATP.

Belongs to the ABC transporter superfamily.

This is an uncharacterized protein from Bacillus subtilis (strain 168).